Consider the following 862-residue polypeptide: Taxadiene synthase (862 aa).

The tract at residues 45–66 is disordered; it reads RVKMSRGSGGPGPVVMMSSSTG. Positions 613, 617, 757, 761, and 765 each coordinate Mg(2+). The DDXXD motif motif lies at 613–617; sequence DDMAD.

It belongs to the terpene synthase family. Mg(2+) is required as a cofactor.

It carries out the reaction (2E,6E,10E)-geranylgeranyl diphosphate = taxa-4(5),11(12)-diene + diphosphate. It functions in the pathway alkaloid biosynthesis; taxol biosynthesis; taxa-4(20),11-dien-5alpha-ol from geranylgeranyl diphosphate: step 1/2. Its function is as follows. Catalyzes the cyclization of the ubiquitous isoprenoid intermediate geranylgeranyl diphosphate to taxa-4,11-diene, the parent olefin with a taxane skeleton. The polypeptide is Taxadiene synthase (TDC1) (Taxus chinensis (Chinese yew)).